Here is a 68-residue protein sequence, read N- to C-terminus: Protein SrnB (68 aa).

The helical transmembrane segment at 23–42 (YALIGLLAVCATVLCFSLIF) threads the bilayer.

This sequence belongs to the Hok/Gef family.

It localises to the cell inner membrane. In terms of biological role, toxic component of a type I toxin-antitoxin (TA) system. Its normal function is believed to be effective plasmid stabilization through postsegregational killing of cells that have lost the F plasmid. Promotes degradation of stable RNA in E.coli. The protein is Protein SrnB (srnB) of Escherichia coli (strain K12).